Reading from the N-terminus, the 198-residue chain is FMN-dependent NADH:quinone oxidoreductase (198 aa).

Residues 92 to 95 (MWNL) and 136 to 139 (SRGG) contribute to the FMN site.

The protein belongs to the azoreductase type 1 family. Homodimer. It depends on FMN as a cofactor.

The catalysed reaction is 2 a quinone + NADH + H(+) = 2 a 1,4-benzosemiquinone + NAD(+). The enzyme catalyses N,N-dimethyl-1,4-phenylenediamine + anthranilate + 2 NAD(+) = 2-(4-dimethylaminophenyl)diazenylbenzoate + 2 NADH + 2 H(+). Quinone reductase that provides resistance to thiol-specific stress caused by electrophilic quinones. Its function is as follows. Also exhibits azoreductase activity. Catalyzes the reductive cleavage of the azo bond in aromatic azo compounds to the corresponding amines. The protein is FMN-dependent NADH:quinone oxidoreductase of Clostridium perfringens (strain SM101 / Type A).